A 202-amino-acid chain; its full sequence is uncharacterized protein (202 aa).

The Smr domain occupies 116-196; sequence LDLHGMTCSE…GKGTTWVLLK (81 aa).

This is an uncharacterized protein from Treponema pallidum (strain Nichols).